Reading from the N-terminus, the 227-residue chain is Ribose-5-phosphate isomerase A (227 aa).

Residues 26–29 (TGST), 82–85 (DGAD), and 95–98 (KGGG) each bind substrate. The Proton acceptor role is filled by glutamate 104. Residue lysine 122 participates in substrate binding.

The protein belongs to the ribose 5-phosphate isomerase family. As to quaternary structure, homodimer.

The catalysed reaction is aldehydo-D-ribose 5-phosphate = D-ribulose 5-phosphate. Its pathway is carbohydrate degradation; pentose phosphate pathway; D-ribose 5-phosphate from D-ribulose 5-phosphate (non-oxidative stage): step 1/1. In terms of biological role, catalyzes the reversible conversion of ribose-5-phosphate to ribulose 5-phosphate. The polypeptide is Ribose-5-phosphate isomerase A (Streptococcus equi subsp. zooepidemicus (strain MGCS10565)).